The following is a 396-amino-acid chain: Acetate kinase (396 aa).

Mg(2+) is bound at residue Asn-8. Residue Lys-15 participates in ATP binding. Arg-89 contributes to the substrate binding site. Asp-146 serves as the catalytic Proton donor/acceptor. ATP contacts are provided by residues His-206 to Gly-210, Asp-283 to Arg-285, and Gly-331 to Asn-335. A Mg(2+)-binding site is contributed by Glu-383.

Belongs to the acetokinase family. As to quaternary structure, homodimer. Requires Mg(2+) as cofactor. Mn(2+) serves as cofactor.

Its subcellular location is the cytoplasm. The catalysed reaction is acetate + ATP = acetyl phosphate + ADP. The protein operates within metabolic intermediate biosynthesis; acetyl-CoA biosynthesis; acetyl-CoA from acetate: step 1/2. Functionally, catalyzes the formation of acetyl phosphate from acetate and ATP. Can also catalyze the reverse reaction. This Streptococcus pneumoniae (strain JJA) protein is Acetate kinase.